A 161-amino-acid chain; its full sequence is Probable ribosome biogenesis protein RLP24 (161 aa).

This sequence belongs to the eukaryotic ribosomal protein eL24 family. As to quaternary structure, associated with nucleolar and cytoplasmic pre-60S particles. At the end of biogenesis it dissociates from cytoplasmic pre-60S particles and is likely to be exchanged for its ribosomal homolog, RPL24.

The protein resides in the nucleus. The protein localises to the nucleolus. Functionally, involved in the biogenesis of the 60S ribosomal subunit. Ensures the docking of GTPBP4/NOG1 to pre-60S particles. This Danio rerio (Zebrafish) protein is Probable ribosome biogenesis protein RLP24 (rsl24d1).